The primary structure comprises 217 residues: MKFFVDTADVKDIRELNDLGLLDGVTTNPSLILKAGRDIVEVTKEICSIVEGPVSAEVTATEYSAMMKEAAALSKIADNICIKLPLTLDGLKACKALTSDGHQTNVTLCFSANQALLAAKAGATFVSPFIGRLDDIAVDGMDLIREIRQIFDNYGYETEILAASVRTVNHVKEAALIGADVVTAPPATLKALVKHPLTDKGLEMFLADWAKTGQKIA.

Lys83 functions as the Schiff-base intermediate with substrate in the catalytic mechanism.

Belongs to the transaldolase family. Type 3B subfamily.

It is found in the cytoplasm. The enzyme catalyses D-sedoheptulose 7-phosphate + D-glyceraldehyde 3-phosphate = D-erythrose 4-phosphate + beta-D-fructose 6-phosphate. It functions in the pathway carbohydrate degradation; pentose phosphate pathway; D-glyceraldehyde 3-phosphate and beta-D-fructose 6-phosphate from D-ribose 5-phosphate and D-xylulose 5-phosphate (non-oxidative stage): step 2/3. In terms of biological role, transaldolase is important for the balance of metabolites in the pentose-phosphate pathway. This chain is Probable transaldolase, found in Rhizobium meliloti (strain 1021) (Ensifer meliloti).